Reading from the N-terminus, the 432-residue chain is Glutamyl-tRNA reductase (432 aa).

Residues 49–52 (TCNR), Ser-101, 106–108 (EPQ), and Gln-112 contribute to the substrate site. The Nucleophile role is filled by Cys-50. 181–186 (GAGETI) serves as a coordination point for NADP(+). The interval 408–432 (PEKPGYRHPPVATPIVRTDDANPAP) is disordered.

This sequence belongs to the glutamyl-tRNA reductase family. As to quaternary structure, homodimer.

The enzyme catalyses (S)-4-amino-5-oxopentanoate + tRNA(Glu) + NADP(+) = L-glutamyl-tRNA(Glu) + NADPH + H(+). It participates in porphyrin-containing compound metabolism; protoporphyrin-IX biosynthesis; 5-aminolevulinate from L-glutamyl-tRNA(Glu): step 1/2. Its function is as follows. Catalyzes the NADPH-dependent reduction of glutamyl-tRNA(Glu) to glutamate 1-semialdehyde (GSA). The polypeptide is Glutamyl-tRNA reductase (Xanthomonas campestris pv. campestris (strain 8004)).